Here is a 292-residue protein sequence, read N- to C-terminus: uncharacterized protein (292 aa).

This sequence belongs to the glycosyltransferase 2 family. WaaE/KdtX subfamily.

This is an uncharacterized protein from Rickettsia prowazekii (strain Madrid E).